Reading from the N-terminus, the 388-residue chain is Quinolone resistance protein NorA (388 aa).

A run of 12 helical transmembrane segments spans residues 5-25 (IFVLYFNIFLIFLGIGLVIPV), 42-62 (LLVAAFALSQMIISPFGGTLA), 69-89 (LIICIGLILFSVSEFMFAVGH), 99-119 (VIGGMSAGMVMPGVTGLIADV), 129-149 (FGYMSAIINSGFILGPGIGGF), 157-177 (MPFYFAGALGILAFIMSVVLI), 201-221 (WKVFITPAILTLVLAFGLSAF), 239-259 (DISIAITGGGIFGALFQIYFF), 269-289 (LTFIAWSLIYSVIVLVLLVIA), 293-313 (WTIMVISFAVFIGFDMIRPAI), 331-351 (LNSTFTSMGNFIGPLIAGALF), and 355-375 (IEAPIYMAIGVSLAGVVIVLI).

The protein belongs to the major facilitator superfamily. TCR/Tet family.

It is found in the cell membrane. Its function is as follows. Involved in quinolone resistance. May constitute a membrane-associated active efflux pump of hydrophilic quinolones. In Staphylococcus aureus (strain MRSA252), this protein is Quinolone resistance protein NorA (norA).